Here is a 193-residue protein sequence, read N- to C-terminus: RNA polymerase sigma-H factor (193 aa).

The short motif at 49–62 (DVAQEAFIKAYRAL) is the Polymerase core binding element. The segment at residues 157–176 (YEDIATVMQCPVGTVRSRIF) is a DNA-binding region (H-T-H motif).

The protein belongs to the sigma-70 factor family. ECF subfamily.

Functionally, sigma factors are initiation factors that promote the attachment of RNA polymerase to specific initiation sites and are then released. This sigma factor regulates genes such as algD, involved in alginate biosynthesis. This chain is RNA polymerase sigma-H factor (algU), found in Pseudomonas aeruginosa (strain ATCC 15692 / DSM 22644 / CIP 104116 / JCM 14847 / LMG 12228 / 1C / PRS 101 / PAO1).